The sequence spans 211 residues: Orotate phosphoribosyltransferase (211 aa).

Lysine 26 is a 5-phospho-alpha-D-ribose 1-diphosphate binding site. Phenylalanine 34–phenylalanine 35 is an orotate binding site. Residues tyrosine 72–lysine 73, arginine 98, lysine 99, lysine 102, histidine 104, and aspartate 123–alanine 131 contribute to the 5-phospho-alpha-D-ribose 1-diphosphate site. The orotate site is built by threonine 127 and arginine 155.

The protein belongs to the purine/pyrimidine phosphoribosyltransferase family. PyrE subfamily. Homodimer. Mg(2+) serves as cofactor.

It carries out the reaction orotidine 5'-phosphate + diphosphate = orotate + 5-phospho-alpha-D-ribose 1-diphosphate. It participates in pyrimidine metabolism; UMP biosynthesis via de novo pathway; UMP from orotate: step 1/2. Its function is as follows. Catalyzes the transfer of a ribosyl phosphate group from 5-phosphoribose 1-diphosphate to orotate, leading to the formation of orotidine monophosphate (OMP). The polypeptide is Orotate phosphoribosyltransferase (Legionella pneumophila (strain Lens)).